The following is a 327-amino-acid chain: Fructose-1,6-bisphosphatase class 1 (327 aa).

Residues E84, D103, L105, and D106 each contribute to the Mg(2+) site. Residues 106–109, N198, and K264 each bind substrate; that span reads DGSS. E270 is a Mg(2+) binding site.

The protein belongs to the FBPase class 1 family. Homotetramer. Mg(2+) serves as cofactor.

Its subcellular location is the cytoplasm. It catalyses the reaction beta-D-fructose 1,6-bisphosphate + H2O = beta-D-fructose 6-phosphate + phosphate. It participates in carbohydrate biosynthesis; gluconeogenesis. The chain is Fructose-1,6-bisphosphatase class 1 from Psychrobacter cryohalolentis (strain ATCC BAA-1226 / DSM 17306 / VKM B-2378 / K5).